The chain runs to 765 residues: Complement factor B (765 aa).

A signal peptide spans 1–25 (MGSNRCPRLGLVPLILGLLSGGVSM). 3 Sushi domains span residues 35-100 (SPCS…ECKA), 101-160 (IRCP…ICDD), and 163-220 (GYCP…SCQD). 6 disulfide bridges follow: C37-C76, C62-C98, C103-C145, C131-C158, C165-C205, and C191-C218. N-linked (GlcNAc...) asparagine glycans are attached at residues N122 and N142. The VWFA domain maps to 270–469 (NIYLVLDGSD…NLEDVFFQML (200 aa)). S278 and S280 together coordinate Mg(2+). N285 carries N-linked (GlcNAc...) asparagine glycosylation. Residue T353 coordinates Mg(2+). The N-linked (GlcNAc...) asparagine glycan is linked to N378. The Peptidase S1 domain occupies 477–758 (LCGMVWEHKD…VLPWLKEKLK (282 aa)). 5 disulfide bridges follow: C478–C596, C511–C527, C599–C615, C660–C686, and C699–C729. Catalysis depends on charge relay system residues H526 and D576. S703 acts as the Charge relay system in catalysis.

The protein belongs to the peptidase S1 family. As to quaternary structure, monomer. Interacts with complement C3b; this interaction is dependent on the presence of Mg(2+). Catalytic component of the C3 convertase of the alternative complement pathway, also named C3bBb, composed of complement factor B Bb and complement C3b. Catalytic component of the C5 convertase of the alternative complement pathway, also named C3bBb3b, composed of complement factor B Bb and additional molecules of complement C3b. Interacts to CFP; this interaction contributes to the stabilization of the active C3-convertase enzyme complex. Mg(2+) is required as a cofactor. Requires Mn(2+) as cofactor. Cleaved by CFD following activation of the alternative complement system, generating Ba and Bb chains. Cleavage and activation takes place when CFB is already associated with complement C3b.

Its subcellular location is the secreted. It is found in the cell surface. It catalyses the reaction Cleavage of Arg-|-Ser bond in complement component C3 alpha-chain to yield C3a and C3b, and Arg-|-Xaa bond in complement component C5 alpha-chain to yield C5a and C5b.. Functionally, precursor of the catalytic component of the C3 and C5 convertase complexes of the alternative pathway of the complement system, a cascade of proteins that leads to phagocytosis and breakdown of pathogens and signaling that strengthens the adaptive immune system. The alternative complement pathway acts as an amplification loop that enhances other complement pathways (classical, lectin and GZMK) by promoting formation of additional C3 and C5 convertases. CFB is cleaved and activated by CFD to generate Ba and Bb chains; Bb chain constituting the catalytic component of the C3 and C5 convertases. In terms of biological role, serine protease component of the complement C3 and C5 convertase complexes of the alternative complement pathway. Following cleavage and activation by factor D (CFD), forms the C3 convertase together with complement C3b. As part of the C3 convertase, cleaves and activates C3 into C3a anaphylatoxin and C3b opsonin, the next components of the complement pathways. When an additional complement C3b molecule binds to the C3 convertase, forms the C5 convertase, which cleaves and activates C5 into C5a anaphylatoxin and C5b component of the membrane attack complex. Its function is as follows. Involved in proliferation and differentiation of preactivated B-lymphocytes, rapid spreading of peripheral blood monocytes, stimulation of lymphocyte blastogenesis and lysis of erythrocytes. In Sus scrofa (Pig), this protein is Complement factor B (CFB).